A 188-amino-acid chain; its full sequence is Der GTPase-activating protein YihI (188 aa).

Disordered regions lie at residues 1–80 (MKQP…VPVP) and 162–188 (DEDD…KDTF). Basic and acidic residues predominate over residues 27–37 (TRDELDAEARD). A compositionally biased stretch (polar residues) spans 47 to 57 (NRSGARTNVEG).

It belongs to the YihI family. Interacts with Der.

Its function is as follows. A GTPase-activating protein (GAP) that modifies Der/EngA GTPase function. May play a role in ribosome biogenesis. In Yersinia pseudotuberculosis serotype O:1b (strain IP 31758), this protein is Der GTPase-activating protein YihI.